The chain runs to 336 residues: tRNA N6-adenosine threonylcarbamoyltransferase (336 aa).

Positions 114 and 118 each coordinate Fe cation. Substrate contacts are provided by residues 136–140 (LVSGG), Asp-169, Gly-182, Asp-186, and Asn-275. Residue Asp-301 coordinates Fe cation.

It belongs to the KAE1 / TsaD family. Fe(2+) is required as a cofactor.

The protein localises to the cytoplasm. It catalyses the reaction L-threonylcarbamoyladenylate + adenosine(37) in tRNA = N(6)-L-threonylcarbamoyladenosine(37) in tRNA + AMP + H(+). In terms of biological role, required for the formation of a threonylcarbamoyl group on adenosine at position 37 (t(6)A37) in tRNAs that read codons beginning with adenine. Is involved in the transfer of the threonylcarbamoyl moiety of threonylcarbamoyl-AMP (TC-AMP) to the N6 group of A37, together with TsaE and TsaB. TsaD likely plays a direct catalytic role in this reaction. The protein is tRNA N6-adenosine threonylcarbamoyltransferase of Streptococcus mutans serotype c (strain ATCC 700610 / UA159).